We begin with the raw amino-acid sequence, 626 residues long: Chaperone protein HtpG (626 aa).

Residues 1 to 339 (MSQNQETRGF…SNDLPLNVSR (339 aa)) form an a; substrate-binding region. A b region spans residues 340-555 (EILQDNKITA…NDQMTTQMAK (216 aa)). Residues 556–626 (LFAAAGQPVP…FIKRINKLLG (71 aa)) are c.

This sequence belongs to the heat shock protein 90 family. Homodimer.

Its subcellular location is the cytoplasm. Its function is as follows. Molecular chaperone. Has ATPase activity. This Haemophilus influenzae (strain PittEE) protein is Chaperone protein HtpG.